We begin with the raw amino-acid sequence, 145 residues long: Transcriptional regulator MraZ (145 aa).

2 SpoVT-AbrB domains span residues 5 to 49 (TYNH…LESE) and 78 to 121 (TYKI…AKEV).

This sequence belongs to the MraZ family. As to quaternary structure, forms oligomers.

It is found in the cytoplasm. It localises to the nucleoid. The sequence is that of Transcriptional regulator MraZ from Ureaplasma parvum serovar 3 (strain ATCC 27815 / 27 / NCTC 11736).